The sequence spans 24 residues: Coenzyme PQQ synthesis protein A (24 aa).

Positions 16 to 20 (EITMY) form a cross-link, pyrroloquinoline quinone (Glu-Tyr).

Belongs to the PqqA family.

It participates in cofactor biosynthesis; pyrroloquinoline quinone biosynthesis. Its function is as follows. Required for coenzyme pyrroloquinoline quinone (PQQ) biosynthesis. PQQ is probably formed by cross-linking a specific glutamate to a specific tyrosine residue and excising these residues from the peptide. This chain is Coenzyme PQQ synthesis protein A, found in Variovorax paradoxus (strain S110).